The primary structure comprises 673 residues: UvrABC system protein B (673 aa).

The Helicase ATP-binding domain maps to A26–R183. G39–T46 is a binding site for ATP. The short motif at Y92 to I115 is the Beta-hairpin element. A Helicase C-terminal domain is found at Q431 to M597. The disordered stretch occupies residues R601–P631. A compositionally biased stretch (basic and acidic residues) spans Q618 to K630. The region spanning A635 to A670 is the UVR domain.

This sequence belongs to the UvrB family. As to quaternary structure, forms a heterotetramer with UvrA during the search for lesions. Interacts with UvrC in an incision complex.

It localises to the cytoplasm. The UvrABC repair system catalyzes the recognition and processing of DNA lesions. A damage recognition complex composed of 2 UvrA and 2 UvrB subunits scans DNA for abnormalities. Upon binding of the UvrA(2)B(2) complex to a putative damaged site, the DNA wraps around one UvrB monomer. DNA wrap is dependent on ATP binding by UvrB and probably causes local melting of the DNA helix, facilitating insertion of UvrB beta-hairpin between the DNA strands. Then UvrB probes one DNA strand for the presence of a lesion. If a lesion is found the UvrA subunits dissociate and the UvrB-DNA preincision complex is formed. This complex is subsequently bound by UvrC and the second UvrB is released. If no lesion is found, the DNA wraps around the other UvrB subunit that will check the other stand for damage. The chain is UvrABC system protein B from Xanthomonas oryzae pv. oryzae (strain PXO99A).